The sequence spans 295 residues: Apolipoprotein E (295 aa).

Positions Met-1 to Ala-18 are cleaved as a signal peptide. Tandem repeats lie at residues Thr-80 to Ser-101, Pro-102 to Gly-123, Ala-124 to Gly-145, Gln-146 to Leu-167, Thr-193 to Arg-211, and Ala-212 to Ala-233. The interval Thr-80–Ala-233 is 6 X 22 AA approximate tandem repeats. Met-143 is subject to Methionine sulfoxide. Phosphoserine is present on Ser-147. The LDL and other lipoprotein receptors binding stretch occupies residues His-158 to Arg-168. Leu-162 to Arg-165 provides a ligand contact to heparin. The lipid-binding and lipoprotein association stretch occupies residues Ala-191 to Met-268. Residues Gln-244–His-295 are homooligomerization. A specificity for association with VLDL region spans residues Arg-256–Met-268.

The protein belongs to the apolipoprotein A1/A4/E family. Homotetramer. May interact with ABCA1; functionally associated with ABCA1 in the biogenesis of HDLs. May interact with APP/A4 amyloid-beta peptide; the interaction is extremely stable in vitro but its physiological significance is unclear. May interact with MAPT. May interact with MAP2. In the cerebrospinal fluid, interacts with secreted SORL1. Interacts with PMEL; this allows the loading of PMEL luminal fragment on ILVs to induce fibril nucleation. APOE exists as multiple glycosylated and sialylated glycoforms within cells and in plasma. The extent of glycosylation and sialylation are tissue and context specific. In terms of processing, glycated in plasma VLDL. Post-translationally, phosphorylated by FAM20C in the extracellular medium.

Its subcellular location is the secreted. The protein localises to the extracellular space. It localises to the extracellular matrix. It is found in the extracellular vesicle. The protein resides in the endosome. Its subcellular location is the multivesicular body. Its function is as follows. APOE is an apolipoprotein, a protein associating with lipid particles, that mainly functions in lipoprotein-mediated lipid transport between organs via the plasma and interstitial fluids. APOE is a core component of plasma lipoproteins and is involved in their production, conversion and clearance. Apolipoproteins are amphipathic molecules that interact both with lipids of the lipoprotein particle core and the aqueous environment of the plasma. As such, APOE associates with chylomicrons, chylomicron remnants, very low density lipoproteins (VLDL) and intermediate density lipoproteins (IDL) but shows a preferential binding to high-density lipoproteins (HDL). It also binds a wide range of cellular receptors including the LDL receptor/LDLR, the LDL receptor-related proteins LRP1, LRP2 and LRP8 and the very low-density lipoprotein receptor/VLDLR that mediate the cellular uptake of the APOE-containing lipoprotein particles. Finally, APOE also has a heparin-binding activity and binds heparan-sulfate proteoglycans on the surface of cells, a property that supports the capture and the receptor-mediated uptake of APOE-containing lipoproteins by cells. A main function of APOE is to mediate lipoprotein clearance through the uptake of chylomicrons, VLDLs, and HDLs by hepatocytes. APOE is also involved in the biosynthesis by the liver of VLDLs as well as their uptake by peripheral tissues ensuring the delivery of triglycerides and energy storage in muscle, heart and adipose tissues. By participating in the lipoprotein-mediated distribution of lipids among tissues, APOE plays a critical role in plasma and tissues lipid homeostasis. APOE is also involved in two steps of reverse cholesterol transport, the HDLs-mediated transport of cholesterol from peripheral tissues to the liver, and thereby plays an important role in cholesterol homeostasis. First, it is functionally associated with ABCA1 in the biogenesis of HDLs in tissues. Second, it is enriched in circulating HDLs and mediates their uptake by hepatocytes. APOE also plays an important role in lipid transport in the central nervous system, regulating neuron survival and sprouting. The chain is Apolipoprotein E (APOE) from Macaca mulatta (Rhesus macaque).